A 274-amino-acid chain; its full sequence is Glutamate racemase (274 aa).

Residues 9–10 and 41–42 contribute to the substrate site; these read DS and YG. Catalysis depends on C73, which acts as the Proton donor/acceptor. 74–75 lines the substrate pocket; the sequence is NT. C183 acts as the Proton donor/acceptor in catalysis. Residue 184-185 participates in substrate binding; that stretch reads TH.

This sequence belongs to the aspartate/glutamate racemases family.

The catalysed reaction is L-glutamate = D-glutamate. Its pathway is cell wall biogenesis; peptidoglycan biosynthesis. Functionally, provides the (R)-glutamate required for cell wall biosynthesis. This chain is Glutamate racemase, found in Shewanella baltica (strain OS223).